Here is a 110-residue protein sequence, read N- to C-terminus: Ribonuclease P protein component 4 (110 aa).

Zn(2+) is bound by residues cysteine 65, cysteine 68, cysteine 94, and cysteine 97.

The protein belongs to the eukaryotic/archaeal RNase P protein component 4 family. As to quaternary structure, consists of a catalytic RNA component and at least 4-5 protein subunits. Zn(2+) serves as cofactor.

The protein resides in the cytoplasm. It catalyses the reaction Endonucleolytic cleavage of RNA, removing 5'-extranucleotides from tRNA precursor.. Functionally, part of ribonuclease P, a protein complex that generates mature tRNA molecules by cleaving their 5'-ends. The protein is Ribonuclease P protein component 4 of Methanococcus maripaludis (strain C7 / ATCC BAA-1331).